We begin with the raw amino-acid sequence, 613 residues long: Myosin light chain kinase 2, skeletal/cardiac muscle (613 aa).

Residues 1-20 are compositionally biased toward polar residues; it reads MTTENGAVELGSQSLSTEQT. A disordered region spans residues 1 to 168; the sequence is MTTENGAVEL…RGSPAFLHSP (168 aa). A compositionally biased stretch (basic and acidic residues) spans 32 to 55; sequence SEKEPSAPATEKDLSPPNAKKDPG. The span at 56–66 shows a compositional bias: pro residues; that stretch reads APDPKNNPDPP. Residues 67 to 83 show a composition bias toward basic and acidic residues; it reads SLKKDPAKAPGPEKKGD. Positions 95–105 are enriched in gly residues; sequence SGEGDGGGGPA. The span at 106–122 shows a compositional bias: low complexity; that stretch reads EGSEGPPAALPLPTATA. Over residues 145 to 158 the composition is skewed to basic and acidic residues; that stretch reads KAGKKAAECREAGR. Ser-161, Ser-167, and Ser-169 each carry phosphoserine. The tract at residues 219–240 is disordered; that stretch reads EKKKEEAEKASGQAGQAKVQGD. The 256-residue stretch at 302–557 folds into the Protein kinase domain; the sequence is MNSKEALGGG…AEQCLAHPWL (256 aa). ATP contacts are provided by residues 308-316 and Lys-331; that span reads LGGGKFGAV. Asp-423 functions as the Proton acceptor in the catalytic mechanism. Position 462 is a phosphothreonine (Thr-462). The tract at residues 591 to 603 is calmodulin-binding; the sequence is IAVSAANRFKKIS.

This sequence belongs to the protein kinase superfamily. CAMK Ser/Thr protein kinase family. In terms of assembly, may interact with centrin.

It localises to the cytoplasm. It carries out the reaction L-seryl-[myosin light chain] + ATP = O-phospho-L-seryl-[myosin light chain] + ADP + H(+). It catalyses the reaction L-threonyl-[myosin light chain] + ATP = O-phospho-L-threonyl-[myosin light chain] + ADP + H(+). Functionally, implicated in the level of global muscle contraction and cardiac function. Phosphorylates a specific serine in the N-terminus of a myosin light chain. This chain is Myosin light chain kinase 2, skeletal/cardiac muscle (Mylk2), found in Mus musculus (Mouse).